Here is a 618-residue protein sequence, read N- to C-terminus: Probable N-acetylgalactosaminyltransferase 6 (618 aa).

Over 1–16 (MIASLIRSRRRSRRCV) the chain is Cytoplasmic. The helical; Signal-anchor for type II membrane protein transmembrane segment at 17–39 (VYSVFLFGFLALWGSFALALVFL) threads the bilayer. Residues 40–618 (SDMYIGEDQI…TEMSWLPEHP (579 aa)) lie on the Lumenal side of the membrane. N-linked (GlcNAc...) asparagine glycosylation is found at asparagine 81 and asparagine 149. Cystine bridges form between cysteine 147–cysteine 381 and cysteine 372–cysteine 452. A catalytic subdomain A region spans residues 156-267 (LPTTSVIIVY…KGWLEPLLTR (112 aa)). Residues aspartate 197 and arginine 228 each coordinate substrate. Residue aspartate 251 participates in Mn(2+) binding. Residue serine 252 coordinates substrate. Residue histidine 253 participates in Mn(2+) binding. The segment at 327–389 (PIESPTMAGG…PCSHVGHVFR (63 aa)) is catalytic subdomain B. Residue tryptophan 358 participates in substrate binding. Histidine 386 provides a ligand contact to Mn(2+). Position 389 (arginine 389) interacts with substrate. The 136-residue stretch at 474 to 609 (RFGRMTSSSN…SNDRQNWTIT (136 aa)) folds into the Ricin B-type lectin domain. Asparagine 483 carries N-linked (GlcNAc...) asparagine glycosylation. Disulfide bonds link cysteine 487–cysteine 505, cysteine 530–cysteine 550, and cysteine 575–cysteine 597. Asparagine 605 carries N-linked (GlcNAc...) asparagine glycosylation.

Belongs to the glycosyltransferase 2 family. GalNAc-T subfamily. It depends on Mn(2+) as a cofactor.

It is found in the golgi apparatus membrane. It participates in protein modification; protein glycosylation. Functionally, probable glycopeptide transferase involved in O-linked oligosaccharide biosynthesis. Glycopeptide transferases catalyze the transfer of an N-acetyl-D-galactosamine residue to an already glycosylated peptide. In contrast to other members of the family, it does not act as a peptide transferase that transfers GalNAc onto serine or threonine residue on peptides that have been tested. Some peptide transferase activity is however not excluded, considering that its appropriate peptide substrate may remain unidentified. The chain is Probable N-acetylgalactosaminyltransferase 6 (gly-6) from Caenorhabditis elegans.